The chain runs to 262 residues: Small ribosomal subunit protein uS2 (262 aa).

The tract at residues 224-262 is disordered; that stretch reads GKQGQDDAQQETADDNAANETVSEDSLKNLKNSVEGKED.

The protein belongs to the universal ribosomal protein uS2 family.

In Limosilactobacillus reuteri (strain DSM 20016) (Lactobacillus reuteri), this protein is Small ribosomal subunit protein uS2.